Here is a 444-residue protein sequence, read N- to C-terminus: MSKTYHFIGIKGSGMSALALMLHQMGHKVQGSDVEKYYFTQRGLEQAGITILPFDEKNLDGDMEIIAGNAFRPDNNVEIAYADQNGISYKRYHEFLGSFMRDFVSMGVAGAHGKTSTTGMLSHVLSHITDTSFLIGDGTGRGSANAKYFVFESDEYERHFMPYHPEYSIITNIDFDHPDYFTSLEDVFNAFNDYAKQITKGLFVYGEDAELRKITSDAPIYYYGFEAEGNDFVASDLLRSTTGSTFTVHFRGQNLGQFHIPTFGRHNIMNATAVIGLLYTAGFDLNLVREHLKTFAGVKRRFTEKIVNDTVIIDDFAHHPTEIIATLDAARQKYPSKEIVAVFQPHTFTRTIALLDDFAHALNQADAVYLAQIYGSAREVDHGDVKVEDLANKINKKHQVITVENVSPLLDHDNAVYVFMGAGDIQTYEYSFERLLSNLTSNVQ.

An ATP-binding site is contributed by 110–116 (GAHGKTS).

This sequence belongs to the MurCDEF family.

Its subcellular location is the cytoplasm. It carries out the reaction UDP-N-acetyl-alpha-D-muramate + L-alanine + ATP = UDP-N-acetyl-alpha-D-muramoyl-L-alanine + ADP + phosphate + H(+). Its pathway is cell wall biogenesis; peptidoglycan biosynthesis. Functionally, cell wall formation. The polypeptide is UDP-N-acetylmuramate--L-alanine ligase (Streptococcus pneumoniae (strain CGSP14)).